A 467-amino-acid polypeptide reads, in one-letter code: Venom prothrombin activator pseutarin-C catalytic subunit (467 aa).

The signal sequence occupies residues 1 to 22 (MAPQLLLCLILTFLWSLPEAES). Positions 23-40 (NVFLKSKVANRFLQRTKR) are excised as a propeptide. In terms of domain architecture, Gla spans 41-86 (ANSLVEEFKSGNIERECIEERCSKEEAREVFEDDEKTETFWNVYVD). Glu46, Glu47, Glu54, Glu56, Glu59, Glu60, Glu65, Glu66, Glu69, and Glu72 each carry 4-carboxyglutamate. Cys57 and Cys62 are disulfide-bonded. One can recognise an EGF-like 1; calcium-binding domain in the interval 86 to 122 (DGDQCSSNPCHYRGICKDGIGSYTCTCLSGYEGKNCE). 11 disulfide bridges follow: Cys90–Cys101, Cys95–Cys110, Cys112–Cys121, Cys129–Cys140, Cys136–Cys149, Cys151–Cys164, Cys172–Cys329, Cys216–Cys221, Cys236–Cys252, Cys377–Cys391, and Cys402–Cys430. An O-linked (Hex...) serine glycan is attached at Ser92. Residues 129 to 164 (CRVDNGNCWHFCKSVQNDIQCSCAEGYLLGEDGHSC) form the EGF-like 2 domain. Positions 182–209 (REASLPDFVQSHNATLLKKSDNPSPDIR) are cleaved as a propeptide — activation peptide. The region spanning 210–454 (IVNGMDCKLG…FIPWIKRIMR (245 aa)) is the Peptidase S1 domain. The active-site Charge relay system is the His251. Asn254 is a glycosylation site (N-linked (GlcNAc...) asparagine). Residue Asp309 is the Charge relay system of the active site. The active-site Charge relay system is the Ser406.

It belongs to the peptidase S1 family. Snake venom subfamily. In terms of assembly, heterodimer of a light and a heavy chains; disulfide-linked. Is associated with pseutarin-C non-catalytic subunit (AC Q7SZN0) in a non-covalent manner. In terms of processing, gamma-carboxyglutamate residues are formed by vitamin K dependent carboxylation. These residues are essential for the binding of calcium. As to expression, expressed by the venom gland.

It is found in the secreted. The catalysed reaction is Selective cleavage of Arg-|-Thr and then Arg-|-Ile bonds in prothrombin to form thrombin.. Activated by calcium and negatively charged phospholipids. Snake prothrombin activator that attacks the hemostatic system of prey. This non-catalytic subunit is functionally similar to blood coagulation factor V. It serves as a critical cofactor for the prothrombinase activity of the catalytic subunit, which is similar to the blood coagulation factor X. The complex converts prothrombin to thrombin by sequential cleavage at two positions, Arg-320 followed by Arg-271. Cleavage at Arg-320 produces an active intermediate known as meizothrombin. Meizothrombin is the 'second' substrate for prothrombinase, and it docks in an altered manner to present the second cleavage site (271). Cleavage at Arg-271 releases active thrombin from its pro-fragment. This order of events is reversed if the protease component of prothrombinase is used on its own, suggesting that the 271 site is inherently more accessible to proteolysis. The complex converts prothrombin to thrombin in presence but also in the absence of membrane. This chain is Venom prothrombin activator pseutarin-C catalytic subunit, found in Pseudonaja textilis (Eastern brown snake).